Reading from the N-terminus, the 389-residue chain is Urotensin-2 receptor (389 aa).

2 stretches are compositionally biased toward polar residues: residues 1-10 and 28-39; these read MALTPESPSS and PNATLNSSWASP. Positions 1–39 are disordered; it reads MALTPESPSSFPGLAAIGSSVPEPPGSPNATLNSSWASP. Over 1-54 the chain is Extracellular; it reads MALTPESPSSFPGLAAIGSSVPEPPGSPNATLNSSWASPTEPSSLEDLVATGAI. N29 and N33 each carry an N-linked (GlcNAc...) asparagine glycan. The chain crosses the membrane as a helical span at residues 55-77; that stretch reads GTLLSAMGVVGVVGNAYTLVVTC. The Cytoplasmic portion of the chain corresponds to 78–87; it reads RSLRAVASMY. A helical transmembrane segment spans residues 88–113; sequence IYVVNLALADLLYLLSIPFIVATYIT. At 114–124 the chain is on the extracellular side; that stretch reads KEWHFGDVGCR. C123 and C199 are disulfide-bonded. Residues 125–146 traverse the membrane as a helical segment; the sequence is VLFSLDFLTMHASIFTLTVMSS. The Cytoplasmic segment spans residues 147–167; it reads ERYAAVLRPLDTVQRPKGYRK. A helical transmembrane segment spans residues 168–186; the sequence is LLALGTWLLALLLTLPVML. The Extracellular segment spans residues 187-209; that stretch reads AMRLVRRGPKSLCLPAWGPRAHR. A helical transmembrane segment spans residues 210-232; the sequence is AYLTLLFATSIAGPGLLIGLLYA. Over 233–258 the chain is Cytoplasmic; it reads RLARAYRRSQRASFKRARRPGARALR. Residues 259-284 traverse the membrane as a helical segment; sequence LVLGIVLLFWACFLPFWLWQLLAQYR. At 285-297 the chain is on the extracellular side; that stretch reads EAPLAPRTARIVN. The helical transmembrane segment at 298–318 threads the bilayer; sequence YLTTCLTYGNSCANPFLYTLL. The Cytoplasmic portion of the chain corresponds to 319–389; sequence TRNYRDHLRG…PALESPGDPA (71 aa). The segment at 328-366 is disordered; sequence GRVRSPGSGGVRGPVPSLQPRARFQRGSGRSLSSCSPQP. A compositionally biased stretch (polar residues) spans 355–366; sequence SGRSLSSCSPQP.

The protein belongs to the G-protein coupled receptor 1 family.

Its subcellular location is the cell membrane. High affinity receptor for urotensin-2 and urotensin-2B. The activity of this receptor is mediated by a G-protein that activate a phosphatidylinositol-calcium second messenger system. The polypeptide is Urotensin-2 receptor (UTS2R) (Macaca mulatta (Rhesus macaque)).